Consider the following 331-residue polypeptide: 5-dehydro-2-deoxygluconokinase (331 aa).

Belongs to the carbohydrate kinase PfkB family.

The enzyme catalyses 5-dehydro-2-deoxy-D-gluconate + ATP = 6-phospho-5-dehydro-2-deoxy-D-gluconate + ADP + H(+). The protein operates within polyol metabolism; myo-inositol degradation into acetyl-CoA; acetyl-CoA from myo-inositol: step 5/7. In terms of biological role, catalyzes the phosphorylation of 5-dehydro-2-deoxy-D-gluconate (2-deoxy-5-keto-D-gluconate or DKG) to 6-phospho-5-dehydro-2-deoxy-D-gluconate (DKGP). This chain is 5-dehydro-2-deoxygluconokinase, found in Photobacterium profundum (strain SS9).